We begin with the raw amino-acid sequence, 58 residues long: UPF0434 protein Daro_3207 (58 aa).

Belongs to the UPF0434 family.

This Dechloromonas aromatica (strain RCB) protein is UPF0434 protein Daro_3207.